Consider the following 347-residue polypeptide: Pre-B-cell leukemia transcription factor 1 (347 aa).

Residues 1 to 37 (MDDQPRLMHSHPGVGMAGHPSLSQHMQDGTGANEGDV) form a disordered region. Positions 38–232 (GRKQDIGDIL…VMILRSRFLD (195 aa)) constitute a PBC domain. A PBC-A region spans residues 45-124 (DILQQIMTIT…EGVAGPEKGG (80 aa)). The PBC-B stretch occupies residues 127–232 (AAAAAAAAAS…VMILRSRFLD (106 aa)). Positions 233-295 (ARRKRRNFNK…NKRIRYKKNI (63 aa)) form a DNA-binding region, homeobox; TALE-type. Polar residues predominate over residues 318 to 331 (VHGSQANSPSTPSS). A disordered region spans residues 318–347 (VHGSQANSPSTPSSAGGYPSPCYQSDRRIQ).

It belongs to the TALE/PBX homeobox family. In terms of assembly, forms a heterodimer with isoform 2 of meis1; the interaction is necessary for neural fate induction. Shows broad, weak expression from blastula through gastrula stages. At stage 14/15, expressed in a broad arc that gives rise to the forebrain and eyes. More intensely expressed in the lateral neural folds (presumptive neural crest) and as horizontal stripes in the posterior neural plate that give rise to the hindbrain. As development proceeds, expression progresses posteriorly along the neural folds and at stage 21, expression is pronounced in the prospective hindbrain and in migratory neural crest cells. At later stages (stage 26), expression becomes intense within the dorsal portion of the forebrain, and in the optic cup, caudal branchial arch, peripheral to the pronephric anlage, and in the dorsal anterior half of the spinal cord. Expression remains robust in the hindbrain but gradually becomes more restricted. At stage 28, expressed in the dorsal lateral portion of the neural tube and in the somatic layer of the lateral plate mesoderm that surrounds the pronephric anlage.

Its subcellular location is the nucleus. Acts as a transcriptional activator in complex with isoform 2 of meis1, to induce posterior neural and neural crest gene expression, and thereby specify hindbrain and neural crest cell fate. Binds to a highly conserved region in the promoter of the neural crest gene zic3. Required for the nuclear transport or retention of isoform 2 of meis1. The sequence is that of Pre-B-cell leukemia transcription factor 1 (pbx1) from Xenopus laevis (African clawed frog).